A 250-amino-acid chain; its full sequence is Ribosome-inactivating protein luffin-B (250 aa).

The active site involves Glu160.

The protein belongs to the ribosome-inactivating protein family. Type 1 RIP subfamily.

It carries out the reaction Endohydrolysis of the N-glycosidic bond at one specific adenosine on the 28S rRNA.. In Luffa aegyptiaca (Sponge gourd), this protein is Ribosome-inactivating protein luffin-B.